A 545-amino-acid polypeptide reads, in one-letter code: 4-coumarate--CoA ligase 2 (545 aa).

The ATP site is built by S192, S193, G194, T195, T196, and K200. (E)-4-coumaroyl-AMP-binding residues include Y242 and S246. K263 provides a ligand contact to CoA. The tract at residues D265–Q334 is SBD1. (E)-4-coumaroyl-AMP contacts are provided by A312, Q334, G335, T339, and M347. ATP-binding residues include Q334, G335, and T339. Residues G335 to Y402 are SBD2. ATP contacts are provided by D423 and R438. (E)-4-coumaroyl-AMP contacts are provided by K440 and K444. CoA-binding residues include K446 and G447. Position 529 (K529) interacts with ATP.

Belongs to the ATP-dependent AMP-binding enzyme family. Requires Mg(2+) as cofactor.

The catalysed reaction is (E)-4-coumarate + ATP + CoA = (E)-4-coumaroyl-CoA + AMP + diphosphate. The enzyme catalyses (E)-4-coumarate + ATP + H(+) = (E)-4-coumaroyl-AMP + diphosphate. It catalyses the reaction (E)-4-coumaroyl-AMP + CoA = (E)-4-coumaroyl-CoA + AMP + H(+). It participates in phytoalexin biosynthesis; 3,4',5-trihydroxystilbene biosynthesis; 3,4',5-trihydroxystilbene from trans-4-coumarate: step 1/2. Carboxylate--CoA ligase that may use 4-coumarate as substrate. Follows a two-step reaction mechanism, wherein the carboxylate substrate first undergoes adenylation by ATP, followed by a thioesterification in the presence of CoA to yield the final CoA thioester. This is 4-coumarate--CoA ligase 2 (4CL2) from Solanum tuberosum (Potato).